The following is a 255-amino-acid chain: Tryptophan synthase alpha chain (255 aa).

Residues glutamate 51 and aspartate 62 each act as proton acceptor in the active site.

The protein belongs to the TrpA family. Tetramer of two alpha and two beta chains.

The catalysed reaction is (1S,2R)-1-C-(indol-3-yl)glycerol 3-phosphate + L-serine = D-glyceraldehyde 3-phosphate + L-tryptophan + H2O. Its pathway is amino-acid biosynthesis; L-tryptophan biosynthesis; L-tryptophan from chorismate: step 5/5. Functionally, the alpha subunit is responsible for the aldol cleavage of indoleglycerol phosphate to indole and glyceraldehyde 3-phosphate. This is Tryptophan synthase alpha chain from Maridesulfovibrio salexigens (strain ATCC 14822 / DSM 2638 / NCIMB 8403 / VKM B-1763) (Desulfovibrio salexigens).